The primary structure comprises 291 residues: MLKDLFKKSKYATVNPSAYKSKVVEEKPNIPSGMWTKCSNCNNMIYYEDLENNKYVCTKCNQHFRISPKERIKQIFDKDTFKEMWKSLKTNNPIDFEDYEEKINQSQSNTGSKEAVVTGVGRINDLEVACAIMDSFFMMGSMGTVVGEKITRIVEYATENNLPILIFTASGGARMQEGIFSLMQMAKISAALARHDEKGLLYITILTDPTTGGVTASFAMEGDIILSEPNTLVGFAGRRVIENTINETLPESFQKSEFLLEKGFIDSIVERKNMRAYLYKILILHGVNKYE.

One can recognise a CoA carboxyltransferase N-terminal domain in the interval 34 to 291; that stretch reads MWTKCSNCNN…LILHGVNKYE (258 aa). Positions 38, 41, 57, and 60 each coordinate Zn(2+). The segment at 38–60 adopts a C4-type zinc-finger fold; sequence CSNCNNMIYYEDLENNKYVCTKC.

It belongs to the AccD/PCCB family. As to quaternary structure, acetyl-CoA carboxylase is a heterohexamer composed of biotin carboxyl carrier protein (AccB), biotin carboxylase (AccC) and two subunits each of ACCase subunit alpha (AccA) and ACCase subunit beta (AccD). Requires Zn(2+) as cofactor.

It is found in the cytoplasm. It catalyses the reaction N(6)-carboxybiotinyl-L-lysyl-[protein] + acetyl-CoA = N(6)-biotinyl-L-lysyl-[protein] + malonyl-CoA. The protein operates within lipid metabolism; malonyl-CoA biosynthesis; malonyl-CoA from acetyl-CoA: step 1/1. In terms of biological role, component of the acetyl coenzyme A carboxylase (ACC) complex. Biotin carboxylase (BC) catalyzes the carboxylation of biotin on its carrier protein (BCCP) and then the CO(2) group is transferred by the transcarboxylase to acetyl-CoA to form malonyl-CoA. The chain is Acetyl-coenzyme A carboxylase carboxyl transferase subunit beta from Clostridium botulinum (strain Eklund 17B / Type B).